The following is a 162-amino-acid chain: D-aminoacyl-tRNA deacylase (162 aa).

The short motif at 145–146 is the Gly-cisPro motif, important for rejection of L-amino acids element; that stretch reads GP.

This sequence belongs to the DTD family. Homodimer.

It is found in the cytoplasm. It carries out the reaction glycyl-tRNA(Ala) + H2O = tRNA(Ala) + glycine + H(+). The enzyme catalyses a D-aminoacyl-tRNA + H2O = a tRNA + a D-alpha-amino acid + H(+). Functionally, an aminoacyl-tRNA editing enzyme that deacylates mischarged D-aminoacyl-tRNAs. Also deacylates mischarged glycyl-tRNA(Ala), protecting cells against glycine mischarging by AlaRS. Acts via tRNA-based rather than protein-based catalysis; rejects L-amino acids rather than detecting D-amino acids in the active site. By recycling D-aminoacyl-tRNA to D-amino acids and free tRNA molecules, this enzyme counteracts the toxicity associated with the formation of D-aminoacyl-tRNA entities in vivo and helps enforce protein L-homochirality. The chain is D-aminoacyl-tRNA deacylase from Bifidobacterium longum (strain NCC 2705).